The following is a 147-amino-acid chain: Cilia- and flagella-associated protein 90 (147 aa).

Positions 1–36 (MEDDEEETTASTLRGKPRPPPVSAQSAFSYIPPRRL) are disordered.

In terms of assembly, microtubule inner protein component of sperm flagellar doublet microtubules.

The protein resides in the cytoplasm. Its subcellular location is the cytoskeleton. The protein localises to the cilium axoneme. It localises to the flagellum axoneme. Its function is as follows. Microtubule inner protein (MIP) part of the dynein-decorated doublet microtubules (DMTs) in cilia axoneme, which is required for motile cilia beating. The chain is Cilia- and flagella-associated protein 90 from Homo sapiens (Human).